A 202-amino-acid polypeptide reads, in one-letter code: MKDIEDLIQKAVELQSNGLAMGQIADELNVSRETVTWLLTRSKKEEITPAPKDISVNWNNIGKSAKRLHNISLALCDVALENLEKIGAEVDVVVGVAANGIPLASMMAYELGADLAIYHRKGQETVRAGKGTISRNFGSVAGKNCVIVDDVITTGSTSREVIEQLREMGAKPRVVVVLVDKKGVDTIFNVPIQSLLKVVRLD.

The protein belongs to the purine/pyrimidine phosphoribosyltransferase family. GfcR subfamily.

The polypeptide is Transcriptional regulator GfcR 2 (Methanosarcina barkeri (strain Fusaro / DSM 804)).